Here is a 586-residue protein sequence, read N- to C-terminus: Retron Ec67 protein (586 aa).

Residues 29 to 262 (FLTNVLYRIG…SRQEVTGLTV (234 aa)) form the Reverse transcriptase domain. Mg(2+) is bound by residues aspartate 120, aspartate 201, and aspartate 202.

This sequence belongs to the bacterial reverse transcriptase family.

It carries out the reaction DNA(n) + a 2'-deoxyribonucleoside 5'-triphosphate = DNA(n+1) + diphosphate. The enzyme catalyses Endonucleolytic cleavage to 5'-phosphomonoester.. Its function is as follows. Reverse transcriptase (RT) component of antiviral defense system retron Ec67, minimally composed of a non-coding RNA (ncRNA) and this RT. Expression of these 2 elements confers protection against bacteriophage T5. At multiplicity of infection (MOI) of 0.02 cultures grow normally when infected with T5 without collapsing, at MOI 2 cultures enter growth stasis. Responsible for synthesis of msDNA-Ec67 (a branched molecule with RNA linked by a 2',5'-phosphodiester bond to ssDNA). The retron transcript serves as primer (from a conserved internal G residue) and template for the reaction, and codes for the RT. Can use other retrons as substrate (msDNA-Mx162 and msDNA-Ec86). Also able to synthesize DNA from a DNA template at least in vitro, although the enzyme is less active with a DNA template. In Escherichia coli, this protein is Retron Ec67 protein.